The following is a 361-amino-acid chain: Spermidine/putrescine import ATP-binding protein PotA (361 aa).

The ABC transporter domain maps to 4–234 (LELRDVTRRF…PANRFIADFI (231 aa)). Position 36–43 (36–43 (GPSGCGKT)) interacts with ATP.

It belongs to the ABC transporter superfamily. Spermidine/putrescine importer (TC 3.A.1.11.1) family. In terms of assembly, the complex is composed of two ATP-binding proteins (PotA), two transmembrane proteins (PotB and PotC) and a solute-binding protein (PotD).

The protein localises to the cell inner membrane. The catalysed reaction is ATP + H2O + polyamine-[polyamine-binding protein]Side 1 = ADP + phosphate + polyamineSide 2 + [polyamine-binding protein]Side 1.. Part of the ABC transporter complex PotABCD involved in spermidine/putrescine import. Responsible for energy coupling to the transport system. This is Spermidine/putrescine import ATP-binding protein PotA from Nitrosomonas europaea (strain ATCC 19718 / CIP 103999 / KCTC 2705 / NBRC 14298).